Reading from the N-terminus, the 195-residue chain is Protein GrpE (195 aa).

Belongs to the GrpE family. Homodimer.

Its subcellular location is the cytoplasm. Its function is as follows. Participates actively in the response to hyperosmotic and heat shock by preventing the aggregation of stress-denatured proteins, in association with DnaK and GrpE. It is the nucleotide exchange factor for DnaK and may function as a thermosensor. Unfolded proteins bind initially to DnaJ; upon interaction with the DnaJ-bound protein, DnaK hydrolyzes its bound ATP, resulting in the formation of a stable complex. GrpE releases ADP from DnaK; ATP binding to DnaK triggers the release of the substrate protein, thus completing the reaction cycle. Several rounds of ATP-dependent interactions between DnaJ, DnaK and GrpE are required for fully efficient folding. The sequence is that of Protein GrpE from Francisella tularensis subsp. holarctica (strain FTNF002-00 / FTA).